Reading from the N-terminus, the 73-residue chain is Translation initiation factor IF-1 (73 aa).

The region spanning 1-73 is the S1-like domain; the sequence is MPKKDGAIEI…TRGRIVYRYK (73 aa).

The protein belongs to the IF-1 family. Component of the 30S ribosomal translation pre-initiation complex which assembles on the 30S ribosome in the order IF-2 and IF-3, IF-1 and N-formylmethionyl-tRNA(fMet); mRNA recruitment can occur at any time during PIC assembly.

It is found in the cytoplasm. Functionally, one of the essential components for the initiation of protein synthesis. Stabilizes the binding of IF-2 and IF-3 on the 30S subunit to which N-formylmethionyl-tRNA(fMet) subsequently binds. Helps modulate mRNA selection, yielding the 30S pre-initiation complex (PIC). Upon addition of the 50S ribosomal subunit IF-1, IF-2 and IF-3 are released leaving the mature 70S translation initiation complex. The polypeptide is Translation initiation factor IF-1 (Salinispora arenicola (strain CNS-205)).